The following is a 147-amino-acid chain: Large ribosomal subunit protein bL9 (147 aa).

This sequence belongs to the bacterial ribosomal protein bL9 family.

In terms of biological role, binds to the 23S rRNA. The polypeptide is Large ribosomal subunit protein bL9 (Geobacter sp. (strain M21)).